Reading from the N-terminus, the 522-residue chain is WEB family protein At2g38370 (522 aa).

Residues 1 to 32 (MAEFPEPGTVNPDSDLSNGRAEKPEIDTSAPF) are disordered. 2 coiled-coil regions span residues 77–264 (ELQR…AARE) and 299–376 (ARSA…RSEN). 2 disordered regions span residues 374 to 397 (SENG…SRRE) and 458 to 493 (MSLG…RKRK). Basic and acidic residues predominate over residues 473 to 486 (TVSKRSEGKENEKR).

The protein belongs to the WEB family.

The chain is WEB family protein At2g38370 from Arabidopsis thaliana (Mouse-ear cress).